Here is a 739-residue protein sequence, read N- to C-terminus: Nuclear pore complex protein NUP62 (739 aa).

19 tandem repeats follow at residues 6-7, 17-18, 50-51, 52-53, 68-69, 70-71, 78-79, 80-81, 91-92, 93-94, 108-109, 110-111, 124-125, 141-142, 159-160, 174-175, 186-187, 207-208, and 221-222. Residues 6 to 450 form a 26 X 2 AA repeats of F-G region; sequence FGQSNSVGGF…AATFSTTGFG (445 aa). The interval 18–67 is disordered; sequence GSSSATNSSSASSTTSPLSFSFNQSSNPSSTGFGFGSSVSSTPASSTTPS. The segment covering 79–218 has biased composition (low complexity); the sequence is GFGSSASSST…ASSSAATSTS (140 aa). The segment at 79-245 is disordered; the sequence is GFGSSASSST…VASSAPGSSS (167 aa). Residues 232–245 show a composition bias toward low complexity; sequence PSFSVASSAPGSSS. 5 consecutive repeat copies span residues 248–249, 271–272, 280–281, 308–309, and 366–367. Disordered stretches follow at residues 281-329, 341-366, and 399-418; these read GSSS…ASPF, TASS…SFSF, and TTTS…SAPA. 2 consecutive repeat copies span residues 426 to 427 and 449 to 450. The interval 471–533 is disordered; that stretch reads KTSTPASSSQ…AVAPVAGSPK (63 aa). Over residues 472–519 the composition is skewed to low complexity; sequence TSTPASSSQPQTTSPAFSFSLPSSTSTTAPATSSATTTQTTLVVPSSS. Residues 584–674 are a coiled coil; it reads RLEIEVAKVV…IRSIIQSVNA (91 aa).

The protein belongs to the nucleoporin NSP1/NUP62 family. As to quaternary structure, part of the nuclear pore complex (NPC). The NPC has an eight-fold symmetrical structure comprising a central transport channel and two rings, the cytoplasmic and nuclear rings, to which eight filaments are attached. The cytoplasmic filaments have loose ends, while the nuclear filaments are joined in a distal ring, forming a nuclear basket. NPCs are highly dynamic in configuration and composition, and can be devided in 3 subcomplexes, the NUP62 subcomplex, the NUP107-160 subcomplex and the NUP93 subcomplex, containing approximately 30 different nucleoporin proteins. Interacts with NUP58 and the importin KPNB1.

It localises to the nucleus envelope. The protein resides in the nucleus. It is found in the nuclear pore complex. This is Nuclear pore complex protein NUP62 from Arabidopsis thaliana (Mouse-ear cress).